Reading from the N-terminus, the 576-residue chain is Proline--tRNA ligase (576 aa).

This sequence belongs to the class-II aminoacyl-tRNA synthetase family. ProS type 1 subfamily. Homodimer.

The protein resides in the cytoplasm. The catalysed reaction is tRNA(Pro) + L-proline + ATP = L-prolyl-tRNA(Pro) + AMP + diphosphate. Functionally, catalyzes the attachment of proline to tRNA(Pro) in a two-step reaction: proline is first activated by ATP to form Pro-AMP and then transferred to the acceptor end of tRNA(Pro). As ProRS can inadvertently accommodate and process non-cognate amino acids such as alanine and cysteine, to avoid such errors it has two additional distinct editing activities against alanine. One activity is designated as 'pretransfer' editing and involves the tRNA(Pro)-independent hydrolysis of activated Ala-AMP. The other activity is designated 'posttransfer' editing and involves deacylation of mischarged Ala-tRNA(Pro). The misacylated Cys-tRNA(Pro) is not edited by ProRS. This Magnetococcus marinus (strain ATCC BAA-1437 / JCM 17883 / MC-1) protein is Proline--tRNA ligase.